The primary structure comprises 107 residues: uncharacterized protein (107 aa).

Positions 13-68 (LQEEFLEPLSLKISDLAQILDVHRNTASNIVNNSSRITLEMAVKLAKVFDTTPEFW) constitute an HTH cro/C1-type domain. A DNA-binding region (H-T-H motif) is located at residues 24–43 (KISDLAQILDVHRNTASNIV).

Belongs to the VapA/VapI family.

This is an uncharacterized protein from Haemophilus influenzae (strain ATCC 51907 / DSM 11121 / KW20 / Rd).